The primary structure comprises 298 residues: Cobalt-precorrin-5B C(1)-methyltransferase (298 aa).

Belongs to the CbiD family.

It carries out the reaction Co-precorrin-5B + S-adenosyl-L-methionine = Co-precorrin-6A + S-adenosyl-L-homocysteine. It functions in the pathway cofactor biosynthesis; adenosylcobalamin biosynthesis; cob(II)yrinate a,c-diamide from sirohydrochlorin (anaerobic route): step 6/10. In terms of biological role, catalyzes the methylation of C-1 in cobalt-precorrin-5B to form cobalt-precorrin-6A. This Archaeoglobus fulgidus (strain ATCC 49558 / DSM 4304 / JCM 9628 / NBRC 100126 / VC-16) protein is Cobalt-precorrin-5B C(1)-methyltransferase.